A 362-amino-acid polypeptide reads, in one-letter code: Probable RNA methyltransferase Tbd_1951 (362 aa).

The active-site Proton acceptor is the glutamate 89. The 227-residue stretch at 92-318 (LLPRDGVCVS…AKLRHSAGQD (227 aa)) folds into the Radical SAM core domain. Cysteine 99 and cysteine 323 are disulfide-bonded. [4Fe-4S] cluster is bound by residues cysteine 106, cysteine 110, and cysteine 113. Residues 151-152 (GE), serine 181, 204-206 (SLH), and asparagine 280 contribute to the S-adenosyl-L-methionine site. Residue cysteine 323 is the S-methylcysteine intermediate of the active site. Residues 342-362 (LPSAETPAASPKAAASIGFPG) are disordered. Over residues 343-362 (PSAETPAASPKAAASIGFPG) the composition is skewed to low complexity.

It belongs to the radical SAM superfamily. RlmN family. Requires [4Fe-4S] cluster as cofactor.

The protein resides in the cytoplasm. This is Probable RNA methyltransferase Tbd_1951 from Thiobacillus denitrificans (strain ATCC 25259 / T1).